We begin with the raw amino-acid sequence, 707 residues long: MGQHIASSESSTNGHVSLETNGDEKTDYSRWRLIDDQGRQSWRYLESDKERVDWPQTTYEKHFLGLDTELPDLTKAQTPLQAAQGAMSYFSQLQLPSGQWASECIGPLFILAFVVIAGYVTDTPLPAGYAVEIRRYLFARQCVADGGWGWHAEASESSAIGTVLSYVVLRLLGTTRDDPRLVRARTLLHEFGGATHAPGLAKFWLCILGVMKWECVNPFLPEFWLSPDSDPASPSKWYLHTRTNFTSMSYVWSKQWSYAGDAITEQLKAELYTQPYDTIDFAGHRSSLAAVDNNYPKWWLVNLMNWLTVAVYIPYFRKPATAESAERKVWDLIVTEDKNTEYIGLSPISKAANLVACYIHDGPDGSSVRAHRRTMGQYFWMTQDGMACNLSDGIQVWDTSLAVQALCAAGASSNPRFQSTLVKAHAFLADHQLLEDVQDQEKCHRWPRKGGWPFSTRYQGYMISECTGEGLRSAMQLQGISHLGLTQRIPEERLRDAVECLLNLQNDTGGFGVYEKRLGSPKLAWLEMGEFVGKTMVTYDYVECTTAAVSALLSFSKLHPNYRAAEIEATTAQGLGFIKQSQKPDGGWYGAWGVCFTYAGMFALETLALAGETYATSEASRRGCDFLLDKQKDDGGWGESYLSLQREEYVQHEESQVVQTAWVCMALMHAGYPGREPIKRGLRLIMSRQQSKGQWYQEALEGGVGDG.

Residues 1–20 (MGQHIASSESSTNGHVSLET) are compositionally biased toward polar residues. Positions 1–22 (MGQHIASSESSTNGHVSLETNG) are disordered. 4 PFTB repeats span residues 130 to 173 (AVEI…RLLG), 494 to 535 (LRDA…VGKT), 571 to 608 (TAQGLGFIKQSQKPDGGWYGAWGVCFTYAGMFALETLA), and 620 to 661 (SRRG…VQTA).

Belongs to the terpene cyclase/mutase family.

Its pathway is secondary metabolite biosynthesis; terpenoid biosynthesis. Its function is as follows. Terpene cyclase/mutase; part of the gene cluster that mediates the biosynthesis of the meroterpenoids arthripenoids. The pathway begins with the HR-PKS atnH that catalyzes two chain-extension steps to form a reduced triketide, which then primes the SAT domain in the NR-PKS atnG to initiate three more cycles of extension to give a linear hexaketide corresponding to the polyketide part of arthripenoids. The FAD-dependent monooxygenase atnJ then performs an oxidative decarboxylation at C11 of the atnH/atnG product, via an electrophilic aromatic hydroxylation with concomitant ipso-decarboxylation. The membrane-bound polyprenyl transferase atnF then introduces a farnesyl group before the FAD-dependent monooxygenase atnK functions as the first epoxidase on terminal C12'-C13' olefin, followed by a second epoxidation on C7'-C8' catalyzed by atnA. The terpene cyclase/mutase atnI then initiates the sequential tricyclic ring formation through protonation of the terminal epoxide and catalyzes the regioselective and stereoselective 6/6/6-tricyclic ring formation. The cytochrome P450 monooxygenase atnM is responsible for hydroxylating both C1' and C10'. The next steps may involve ketoreduction and acetyl transfer by the ketoreductase atnB and the acetyltransferase atnC, and lead to the production of arthripenoid B, the final biosynthetic product of the atn cluster. The hydroquinone moiety in arthripenoid B is prone to undergo spontaneous oxidation to afford a benzoquinone compound, a key intermediate for generating structure diversity. For instance, addition of a cysteine followed by ring contraction gives arthripenoid A, tautomerization gives the main product arthripenoid C, addition of a molecular of water or amine affords arthripenoid D or E, respectively, and loss of one water forms arthripenoid F. The sequence is that of Terpene cyclase/mutase atnI from Arthrinium sp.